Here is a 312-residue protein sequence, read N- to C-terminus: Protoheme IX farnesyltransferase (312 aa).

Topologically, residues 1-36 (MNKSNTAIDPTNVIEAGPDSSVADVQQKSWKDYLVL) are cytoplasmic. Residues 37–55 (AKQGIVTSNLITTFAGIYL) traverse the membrane as a helical segment. The Extracellular portion of the chain corresponds to 56-69 (AIVYTGTVFTMHLD). The helical transmembrane segment at 70-88 (TMIFALLGAALVMAGGCTL) threads the bilayer. The Cytoplasmic segment spans residues 89-110 (NNYIDRDIDHLMERTKERPTVT). Residues 111-129 (GRFSAKHVLLVGLAQAALG) form a helical membrane-spanning segment. Residues 130-138 (IIFLALTTP) lie on the Extracellular side of the membrane. Residues 139–157 (TAAVIGLIGLFIYVVLYTM) traverse the membrane as a helical segment. Residues 158 to 228 (WTKRTTTLNT…YRAAGIPMLP (71 aa)) are Cytoplasmic-facing. Residues 229 to 247 (VVAGFEMTKRQMVVYVAAL) form a helical membrane-spanning segment. The Extracellular portion of the chain corresponds to 248–259 (LPVSLMLYPFGL). Residues 260 to 275 (VYTIVAAVLGVGWLAL) traverse the membrane as a helical segment. Topologically, residues 276–296 (GIAGFKMKDDIKWARLMFVYS) are cytoplasmic. Residues 297–307 (LNYLTILFVLM) form a helical membrane-spanning segment. Residues 308-312 (VIVHF) lie on the Extracellular side of the membrane.

Belongs to the UbiA prenyltransferase family.

The protein localises to the cell membrane. The catalysed reaction is heme b + (2E,6E)-farnesyl diphosphate + H2O = Fe(II)-heme o + diphosphate. The protein operates within porphyrin-containing compound metabolism; heme O biosynthesis; heme O from protoheme: step 1/1. Functionally, converts protoheme IX and farnesyl diphosphate to heme O. The polypeptide is Protoheme IX farnesyltransferase (ctaB) (Alkalihalophilus pseudofirmus (strain ATCC BAA-2126 / JCM 17055 / OF4) (Bacillus pseudofirmus)).